A 393-amino-acid chain; its full sequence is Acetate kinase (393 aa).

Asn7 contributes to the Mg(2+) binding site. Position 14 (Lys14) interacts with ATP. Residue Arg87 participates in substrate binding. The active-site Proton donor/acceptor is Asp144. ATP is bound by residues 202-206 (HIGNG), 277-279 (DLR), and 326-330 (GVGEN). Glu380 is a binding site for Mg(2+).

This sequence belongs to the acetokinase family. Homodimer. It depends on Mg(2+) as a cofactor. Mn(2+) is required as a cofactor.

It is found in the cytoplasm. It carries out the reaction acetate + ATP = acetyl phosphate + ADP. Its pathway is metabolic intermediate biosynthesis; acetyl-CoA biosynthesis; acetyl-CoA from acetate: step 1/2. In terms of biological role, catalyzes the formation of acetyl phosphate from acetate and ATP. Can also catalyze the reverse reaction. The polypeptide is Acetate kinase (Mycoplasmopsis pulmonis (strain UAB CTIP) (Mycoplasma pulmonis)).